We begin with the raw amino-acid sequence, 252 residues long: Imidazole glycerol phosphate synthase subunit HisF (252 aa).

Catalysis depends on residues D11 and D130.

Belongs to the HisA/HisF family. Heterodimer of HisH and HisF.

The protein localises to the cytoplasm. It catalyses the reaction 5-[(5-phospho-1-deoxy-D-ribulos-1-ylimino)methylamino]-1-(5-phospho-beta-D-ribosyl)imidazole-4-carboxamide + L-glutamine = D-erythro-1-(imidazol-4-yl)glycerol 3-phosphate + 5-amino-1-(5-phospho-beta-D-ribosyl)imidazole-4-carboxamide + L-glutamate + H(+). It functions in the pathway amino-acid biosynthesis; L-histidine biosynthesis; L-histidine from 5-phospho-alpha-D-ribose 1-diphosphate: step 5/9. IGPS catalyzes the conversion of PRFAR and glutamine to IGP, AICAR and glutamate. The HisF subunit catalyzes the cyclization activity that produces IGP and AICAR from PRFAR using the ammonia provided by the HisH subunit. The chain is Imidazole glycerol phosphate synthase subunit HisF from Desulforamulus reducens (strain ATCC BAA-1160 / DSM 100696 / MI-1) (Desulfotomaculum reducens).